A 118-amino-acid polypeptide reads, in one-letter code: Small ribosomal subunit protein uS13 (118 aa).

The interval 91–118 (HRRGLPVRGQRTKTNARTRKGPRKPIKK) is disordered.

It belongs to the universal ribosomal protein uS13 family. In terms of assembly, part of the 30S ribosomal subunit. Forms a loose heterodimer with protein S19. Forms two bridges to the 50S subunit in the 70S ribosome.

Located at the top of the head of the 30S subunit, it contacts several helices of the 16S rRNA. In the 70S ribosome it contacts the 23S rRNA (bridge B1a) and protein L5 of the 50S subunit (bridge B1b), connecting the 2 subunits; these bridges are implicated in subunit movement. Contacts the tRNAs in the A and P-sites. This chain is Small ribosomal subunit protein uS13, found in Sodalis glossinidius (strain morsitans).